The chain runs to 1099 residues: R3H domain-containing protein 1 (1099 aa).

Residues 111-146 (SFEKEEKPSKDEAEKEKASDKLPRKMLSRDSSQEYT) form a disordered region. Basic and acidic residues predominate over residues 112–142 (FEKEEKPSKDEAEKEKASDKLPRKMLSRDSS). Residues 168–231 (RMMLLKLEQE…SVIVNKTSNT (64 aa)) enclose the R3H domain. 2 positions are modified to phosphoserine: Ser187 and Ser262. The 71-residue stretch at 232–302 (RIPDQKFNEH…ARDRIFSQDS (71 aa)) folds into the SUZ domain. A disordered region spans residues 267-287 (DNQMRIRLKDDRRSKSIEERE). Ser302 is modified (phosphoserine). The segment at 331–370 (RVNKDASGRSTNSHQSSTENELKYSEPRPWSSTDSDSSLR) is disordered. Polar residues-rich tracts occupy residues 338–349 (GRSTNSHQSSTE) and 360–370 (WSSTDSDSSLR). Residues Ser380, Ser381, and Ser393 each carry the phosphoserine modification. Disordered stretches follow at residues 387–439 (VLTR…SSHG), 490–537 (QTGQ…AANH), 583–625 (YIMT…HPVS), and 797–825 (EQVQ…PPPP). Residues 391–422 (GDSSGSSKSIGRLSKTGSESSGSVGSSTGSLS) show a composition bias toward low complexity. Composition is skewed to pro residues over residues 519–532 (PGPP…PPQQ) and 588–611 (APPP…PGQP). Polar residues predominate over residues 797–817 (EQVQFPRTTSPCSSQQLQGHQ). Position 929 is an asymmetric dimethylarginine; alternate (Arg929). Arg929 carries the omega-N-methylarginine; alternate modification. A disordered region spans residues 941–977 (PPAVLHGHIPNQQGQPGSRHGNRGRRQAKKAASTDLG). Basic residues predominate over residues 960–969 (HGNRGRRQAK). Ser973 is subject to Phosphoserine.

The protein is R3H domain-containing protein 1 (R3HDM1) of Homo sapiens (Human).